Consider the following 857-residue polypeptide: DNA mismatch repair protein MutS (857 aa).

An ATP-binding site is contributed by 621-628 (GPNMGGKS).

This sequence belongs to the DNA mismatch repair MutS family.

Its function is as follows. This protein is involved in the repair of mismatches in DNA. It is possible that it carries out the mismatch recognition step. This protein has a weak ATPase activity. This is DNA mismatch repair protein MutS from Francisella tularensis subsp. tularensis (strain SCHU S4 / Schu 4).